A 277-amino-acid polypeptide reads, in one-letter code: Ubiquinone biosynthesis protein COQ4, mitochondrial (277 aa).

The transit peptide at 1–14 (MLTKRALRTTDPYR) directs the protein to the mitochondrion. Zn(2+) contacts are provided by histidine 157, aspartate 158, histidine 161, and glutamate 173.

Belongs to the COQ4 family. In terms of assembly, component of a multi-subunit COQ enzyme complex, composed of at least COQ3, COQ4, COQ5, COQ6, COQ7 and COQ9. It depends on Zn(2+) as a cofactor.

It is found in the mitochondrion inner membrane. It catalyses the reaction a 4-hydroxy-3-methoxy-5-(all-trans-polyprenyl)benzoate + H(+) = a 2-methoxy-6-(all-trans-polyprenyl)phenol + CO2. It functions in the pathway cofactor biosynthesis; ubiquinone biosynthesis. In terms of biological role, lyase that catalyzes the C1-decarboxylation of 4-hydroxy-3-methoxy-5-(all-trans-polyprenyl)benzoic acid into 2-methoxy-6-(all-trans-polyprenyl)phenol during ubiquinone biosynthesis. The protein is Ubiquinone biosynthesis protein COQ4, mitochondrial of Ajellomyces capsulatus (strain G186AR / H82 / ATCC MYA-2454 / RMSCC 2432) (Darling's disease fungus).